A 397-amino-acid polypeptide reads, in one-letter code: Lysophospholipid transporter LplT (397 aa).

At 1–17 (MSESVHTNTSLWSKGMK) the chain is on the periplasmic side. The helical transmembrane segment at 18 to 38 (AVIVAQFLSAFGDNALLFATL) threads the bilayer. Residues 39-52 (ALLNAQFYPEWSQP) lie on the Cytoplasmic side of the membrane. The chain crosses the membrane as a helical span at residues 53-73 (ILQMVFVGAYILFAPFVGQVA). The Periplasmic segment spans residues 74-90 (DSFAKGRVMMFANGLKL). The helical transmembrane segment at 91-111 (LGAASICFGINPFLGYTLVGV) threads the bilayer. The Cytoplasmic segment spans residues 112-144 (GAAAYSPAKYGILGELTTGSKLVKANGLMEAST). The chain crosses the membrane as a helical span at residues 145–165 (IAAILLGSVAGGVLADWHVLV). Ala166 is a topological domain (periplasmic). Residues 167–187 (LAACALAYGGAVVANIYIPKL) form a helical membrane-spanning segment. At 188 to 226 (AAARPGQSWNLINMTRSFLNACTSLWRNGETRFSLVGTS) the chain is on the cytoplasmic side. Residues 227 to 247 (LFWGAGVTLRFLLVLWVPVAL) form a helical membrane-spanning segment. The Periplasmic portion of the chain corresponds to 248–256 (GITDNATPT). A helical membrane pass occupies residues 257 to 277 (YLNAMVAIGIVVGAGAAAKLV). Topologically, residues 278 to 280 (TLE) are cytoplasmic. A helical transmembrane segment spans residues 281 to 301 (TVSRCMPAGILIGVVVLIFSL). At 302–304 (QHE) the chain is on the periplasmic side. Residues 305-325 (LLPAYALLMLIGVMGGFFVVP) form a helical membrane-spanning segment. At 326–343 (LNALLQERGKKSVGAGNA) the chain is on the cytoplasmic side. Residues 344–364 (IAVQNLGENSAMLLMLGIYSL) form a helical membrane-spanning segment. Residues 365-366 (AV) are Periplasmic-facing. Residues 367 to 387 (MIGIPVVPIGIGFGALFALAI) form a helical membrane-spanning segment. Residues 388 to 397 (TALWIWQRRH) lie on the Cytoplasmic side of the membrane.

The protein belongs to the major facilitator superfamily. LplT (TC 2.A.1.42) family.

Its subcellular location is the cell inner membrane. Its function is as follows. Catalyzes the facilitated diffusion of 2-acyl-glycero-3-phosphoethanolamine (2-acyl-GPE) into the cell. This is Lysophospholipid transporter LplT from Escherichia coli (strain SE11).